Reading from the N-terminus, the 743-residue chain is Coiled-coil domain-containing protein 30 (743 aa).

Composition is skewed to basic and acidic residues over residues 1–22 (MSQE…REKQ) and 133–193 (SPKE…MKPE). Disordered regions lie at residues 1–25 (MSQE…QLAS), 114–193 (ENIC…MKPE), 208–233 (SLLQ…GDKL), and 695–715 (SKEA…LVCS). Coiled coils occupy residues 21–98 (KQLA…QLNH) and 165–580 (REGQ…LIHS). Low complexity predominate over residues 208–223 (SLLQSQSSGDSSDDSG).

This sequence belongs to the prefoldin subunit beta family.

The polypeptide is Coiled-coil domain-containing protein 30 (CCDC30) (Macaca fascicularis (Crab-eating macaque)).